The following is a 202-amino-acid chain: LexA repressor (202 aa).

Active-site for autocatalytic cleavage activity residues include Ser-123 and Lys-159.

This sequence belongs to the peptidase S24 family. As to quaternary structure, homodimer.

It catalyses the reaction Hydrolysis of Ala-|-Gly bond in repressor LexA.. Its function is as follows. Binds the consensus sequence 5'-TGTTC-N(4)-GAACA-3'; some genes have a tandem consensus sequence, at high concentrations their binding is cooperative. Binds to the promoters of a number of genes, including dinB, imuA, lexA, recA, recQ, splB and uvrA. Represses a number of genes involved in the response to DNA damage (SOS response). In the presence of single-stranded DNA, RecA interacts with LexA causing an autocatalytic cleavage which disrupts the DNA-binding part of LexA, leading to derepression of the SOS regulon and eventually DNA repair. This chain is LexA repressor, found in Verrucomicrobium spinosum (strain ATCC 43997 / DSM 4136 / JCM 18804 / IFAM 1439).